A 213-amino-acid polypeptide reads, in one-letter code: Ribonuclease Oy (213 aa).

H35 is a catalytic residue. A disulfide bridge connects residues C51 and C96. The N-linked (GlcNAc...) asparagine glycan is linked to N52. Residues E89 and H93 contribute to the active site. N-linked (GlcNAc...) asparagine glycans are attached at residues N121 and N142. Intrachain disulfides connect C160–C198 and C178–C188.

This sequence belongs to the RNase T2 family.

The protein localises to the secreted. In terms of biological role, releases mononucleotides from RNA in the order of 3'-GMP, 3'-AMP and 3'-UMP. This is Ribonuclease Oy from Magallana gigas (Pacific oyster).